The primary structure comprises 279 residues: Phosphatidylglycerol--prolipoprotein diacylglyceryl transferase (279 aa).

The next 7 membrane-spanning stretches (helical) occupy residues 25–45 (WYGL…KFFV), 60–80 (YFIW…ILIY), 103–123 (FVGI…IATI), 133–153 (LWSL…FGRI), 181–201 (PSQL…LYFY), 209–229 (GELI…TEFL), and 236–256 (IGYF…MLIL). Arg-152 serves as a coordination point for a 1,2-diacyl-sn-glycero-3-phospho-(1'-sn-glycerol).

This sequence belongs to the Lgt family.

Its subcellular location is the cell inner membrane. The enzyme catalyses L-cysteinyl-[prolipoprotein] + a 1,2-diacyl-sn-glycero-3-phospho-(1'-sn-glycerol) = an S-1,2-diacyl-sn-glyceryl-L-cysteinyl-[prolipoprotein] + sn-glycerol 1-phosphate + H(+). It participates in protein modification; lipoprotein biosynthesis (diacylglyceryl transfer). Its function is as follows. Catalyzes the transfer of the diacylglyceryl group from phosphatidylglycerol to the sulfhydryl group of the N-terminal cysteine of a prolipoprotein, the first step in the formation of mature lipoproteins. The protein is Phosphatidylglycerol--prolipoprotein diacylglyceryl transferase of Campylobacter hominis (strain ATCC BAA-381 / DSM 21671 / CCUG 45161 / LMG 19568 / NCTC 13146 / CH001A).